The chain runs to 146 residues: MTQRFKQLETAAQGTREATRDLLDAARWNDAGLIPAIAQQHDSGEVLMMAWMNRAALEETLATGRVCYWSRSRGKPWRKGESSGQVQQLVTAHLDCDGDTLLLGVDQQGPACHTGRRSCFYVALGADTAHVDSAPLVDPHELYGER.

Asp-95 serves as a coordination point for Mg(2+). Cys-96 is a Zn(2+) binding site. Residues Asp-97 and Asp-99 each coordinate Mg(2+). The Zn(2+) site is built by Cys-112 and Cys-119.

The protein belongs to the PRA-CH family. As to quaternary structure, homodimer. Requires Mg(2+) as cofactor. The cofactor is Zn(2+).

The protein localises to the cytoplasm. It catalyses the reaction 1-(5-phospho-beta-D-ribosyl)-5'-AMP + H2O = 1-(5-phospho-beta-D-ribosyl)-5-[(5-phospho-beta-D-ribosylamino)methylideneamino]imidazole-4-carboxamide. The protein operates within amino-acid biosynthesis; L-histidine biosynthesis; L-histidine from 5-phospho-alpha-D-ribose 1-diphosphate: step 3/9. In terms of biological role, catalyzes the hydrolysis of the adenine ring of phosphoribosyl-AMP. This is Phosphoribosyl-AMP cyclohydrolase from Chromohalobacter salexigens (strain ATCC BAA-138 / DSM 3043 / CIP 106854 / NCIMB 13768 / 1H11).